A 383-amino-acid polypeptide reads, in one-letter code: Anhydro-N-acetylmuramic acid kinase (383 aa).

Position 9–16 (9–16 (GTSVDSID)) interacts with ATP.

The protein belongs to the anhydro-N-acetylmuramic acid kinase family.

The catalysed reaction is 1,6-anhydro-N-acetyl-beta-muramate + ATP + H2O = N-acetyl-D-muramate 6-phosphate + ADP + H(+). It participates in amino-sugar metabolism; 1,6-anhydro-N-acetylmuramate degradation. The protein operates within cell wall biogenesis; peptidoglycan recycling. Functionally, catalyzes the specific phosphorylation of 1,6-anhydro-N-acetylmuramic acid (anhMurNAc) with the simultaneous cleavage of the 1,6-anhydro ring, generating MurNAc-6-P. Is required for the utilization of anhMurNAc either imported from the medium or derived from its own cell wall murein, and thus plays a role in cell wall recycling. The sequence is that of Anhydro-N-acetylmuramic acid kinase from Crocosphaera subtropica (strain ATCC 51142 / BH68) (Cyanothece sp. (strain ATCC 51142)).